Consider the following 899-residue polypeptide: Protein translocase subunit SecA (899 aa).

ATP-binding positions include Gln-87, 105-109 (GEGKT), and Asp-516. Cys-884, Cys-886, Cys-895, and His-896 together coordinate Zn(2+).

The protein belongs to the SecA family. In terms of assembly, monomer and homodimer. Part of the essential Sec protein translocation apparatus which comprises SecA, SecYEG and auxiliary proteins SecDF. Other proteins may also be involved. It depends on Zn(2+) as a cofactor.

The protein resides in the cell inner membrane. It is found in the cytoplasm. It catalyses the reaction ATP + H2O + cellular proteinSide 1 = ADP + phosphate + cellular proteinSide 2.. In terms of biological role, part of the Sec protein translocase complex. Interacts with the SecYEG preprotein conducting channel. Has a central role in coupling the hydrolysis of ATP to the transfer of proteins into and across the cell membrane, serving as an ATP-driven molecular motor driving the stepwise translocation of polypeptide chains across the membrane. The protein is Protein translocase subunit SecA of Borreliella afzelii (strain PKo) (Borrelia afzelii).